A 190-amino-acid polypeptide reads, in one-letter code: Xanthine phosphoribosyltransferase (190 aa).

Xanthine contacts are provided by Leu-20 and Asn-27. 127–131 (AYGNA) serves as a coordination point for 5-phospho-alpha-D-ribose 1-diphosphate. Lys-155 lines the xanthine pocket.

The protein belongs to the purine/pyrimidine phosphoribosyltransferase family. Xpt subfamily. As to quaternary structure, homodimer.

It is found in the cytoplasm. The enzyme catalyses XMP + diphosphate = xanthine + 5-phospho-alpha-D-ribose 1-diphosphate. The protein operates within purine metabolism; XMP biosynthesis via salvage pathway; XMP from xanthine: step 1/1. In terms of biological role, converts the preformed base xanthine, a product of nucleic acid breakdown, to xanthosine 5'-monophosphate (XMP), so it can be reused for RNA or DNA synthesis. The chain is Xanthine phosphoribosyltransferase from Bacteroides thetaiotaomicron (strain ATCC 29148 / DSM 2079 / JCM 5827 / CCUG 10774 / NCTC 10582 / VPI-5482 / E50).